Consider the following 258-residue polypeptide: Mitochondrial distribution and morphology protein 12 (258 aa).

The 233-residue stretch at 1-233 (MSFDIHWSNL…WPSWIELDFN (233 aa)) folds into the SMP-LTD domain. Positions 238–258 (EDLQQSKDTPTTANTGTTTTN) are disordered. Positions 246-258 (TPTTANTGTTTTN) are enriched in low complexity.

This sequence belongs to the MDM12 family. As to quaternary structure, component of the ER-mitochondria encounter structure (ERMES) or MDM complex, composed of MMM1, MDM10, MDM12 and MDM34. An MMM1 homodimer associates with one molecule of MDM12 on each side in a pairwise head-to-tail manner, and the SMP-LTD domains of MMM1 and MDM12 generate a continuous hydrophobic tunnel for phospholipid trafficking.

The protein localises to the mitochondrion outer membrane. It is found in the endoplasmic reticulum membrane. Component of the ERMES/MDM complex, which serves as a molecular tether to connect the endoplasmic reticulum (ER) and mitochondria. Components of this complex are involved in the control of mitochondrial shape and protein biogenesis, and function in nonvesicular lipid trafficking between the ER and mitochondria. MDM12 is required for the interaction of the ER-resident membrane protein MMM1 and the outer mitochondrial membrane-resident beta-barrel protein MDM10. The MDM12-MMM1 subcomplex functions in the major beta-barrel assembly pathway that is responsible for biogenesis of all mitochondrial outer membrane beta-barrel proteins, and acts in a late step after the SAM complex. The MDM10-MDM12-MMM1 subcomplex further acts in the TOM40-specific pathway after the action of the MDM12-MMM1 complex. Essential for establishing and maintaining the structure of mitochondria and maintenance of mtDNA nucleoids. This Zygosaccharomyces rouxii (strain ATCC 2623 / CBS 732 / NBRC 1130 / NCYC 568 / NRRL Y-229) protein is Mitochondrial distribution and morphology protein 12.